We begin with the raw amino-acid sequence, 295 residues long: Phosphoenolpyruvate phosphomutase (295 aa).

Aspartate 58 (nucleophile) is an active-site residue. Residue aspartate 58 participates in Mg(2+) binding.

The protein belongs to the isocitrate lyase/PEP mutase superfamily. PEP mutase family. As to quaternary structure, homotetramer. Mg(2+) serves as cofactor.

The enzyme catalyses phosphoenolpyruvate + H(+) = 3-phosphonopyruvate. It functions in the pathway phosphorus metabolism; phosphonate biosynthesis. Its function is as follows. Formation of a carbon-phosphorus bond by converting phosphoenolpyruvate (PEP) to phosphonopyruvate (P-Pyr). The protein is Phosphoenolpyruvate phosphomutase of Mytilus edulis (Blue mussel).